The following is a 263-amino-acid chain: Cysteine-rich repeat secretory protein 55 (263 aa).

The first 20 residues, Met-1–Ala-20, serve as a signal peptide directing secretion. 2 consecutive Gnk2-homologous domains span residues Asp-22–Phe-126 and Thr-132–Phe-240.

This sequence belongs to the cysteine-rich repeat secretory protein family.

Its subcellular location is the secreted. This chain is Cysteine-rich repeat secretory protein 55 (CRRSP55), found in Arabidopsis thaliana (Mouse-ear cress).